Reading from the N-terminus, the 136-residue chain is Aspartate 1-decarboxylase (136 aa).

S25 functions as the Schiff-base intermediate with substrate; via pyruvic acid in the catalytic mechanism. S25 is subject to Pyruvic acid (Ser). Position 57 (T57) interacts with substrate. Y58 functions as the Proton donor in the catalytic mechanism. 73-75 is a substrate binding site; that stretch reads GAA.

It belongs to the PanD family. As to quaternary structure, heterooctamer of four alpha and four beta subunits. Requires pyruvate as cofactor. In terms of processing, is synthesized initially as an inactive proenzyme, which is activated by self-cleavage at a specific serine bond to produce a beta-subunit with a hydroxyl group at its C-terminus and an alpha-subunit with a pyruvoyl group at its N-terminus.

The protein localises to the cytoplasm. It catalyses the reaction L-aspartate + H(+) = beta-alanine + CO2. The protein operates within cofactor biosynthesis; (R)-pantothenate biosynthesis; beta-alanine from L-aspartate: step 1/1. Catalyzes the pyruvoyl-dependent decarboxylation of aspartate to produce beta-alanine. The chain is Aspartate 1-decarboxylase from Acidothermus cellulolyticus (strain ATCC 43068 / DSM 8971 / 11B).